The sequence spans 104 residues: Integration host factor subunit beta (104 aa).

It belongs to the bacterial histone-like protein family. In terms of assembly, heterodimer of an alpha and a beta chain.

In terms of biological role, this protein is one of the two subunits of integration host factor, a specific DNA-binding protein that functions in genetic recombination as well as in transcriptional and translational control. The chain is Integration host factor subunit beta (ihfB) from Neisseria gonorrhoeae.